The following is a 388-amino-acid chain: MPISETWLLPDGVADVLPEQAQVVETLRRQALDFLASRGYQLVYTPFIEYIESLSLLSESNHDLDLVTFKVIDQLSGRLLGVRADMTPQVARIDAHVRSIEGVARYCYAGTVLHTKPQNFNSSRAPLQLGAELYGHQSLEADIEMVDVMLGLIQQAHNLEGLHLDLGHVGLFRSLVKRAGLSKQVEQDLSDLYQRKALPELEEVTKTLAFGSDFYALGRYASDLNALEQHLSQDVLNDASFKTSLDDLKTTLSQIQTRWPNLRIGIDVVELRSYHYHTGLMYAVYAPNRAAPLAQGGRYDGIGEHFGRARPATGFSCDLYALCVGQFKEIETIVAPAGQDQQLLGAIAQARQNGLRVIQLLGNDDLSSVPYATHKMELAQDQWQINKI.

It belongs to the class-II aminoacyl-tRNA synthetase family. HisZ subfamily. As to quaternary structure, heteromultimer composed of HisG and HisZ subunits.

Its subcellular location is the cytoplasm. It participates in amino-acid biosynthesis; L-histidine biosynthesis; L-histidine from 5-phospho-alpha-D-ribose 1-diphosphate: step 1/9. Required for the first step of histidine biosynthesis. May allow the feedback regulation of ATP phosphoribosyltransferase activity by histidine. This Acinetobacter baylyi (strain ATCC 33305 / BD413 / ADP1) protein is ATP phosphoribosyltransferase regulatory subunit.